The following is a 258-amino-acid chain: Large ribosomal subunit protein bL28m (258 aa).

Residues 1–21 constitute a mitochondrion transit peptide; the sequence is MQKIFRPFQLTRGFTSSVKNF.

Belongs to the bacterial ribosomal protein bL28 family. As to quaternary structure, component of the mitochondrial large ribosomal subunit (mt-LSU). Mature yeast 74S mitochondrial ribosomes consist of a small (37S) and a large (54S) subunit. The 37S small subunit contains a 15S ribosomal RNA (15S mt-rRNA) and 34 different proteins. The 54S large subunit contains a 21S rRNA (21S mt-rRNA) and 46 different proteins.

It localises to the mitochondrion. Its function is as follows. Component of the mitochondrial ribosome (mitoribosome), a dedicated translation machinery responsible for the synthesis of mitochondrial genome-encoded proteins, including at least some of the essential transmembrane subunits of the mitochondrial respiratory chain. The mitoribosomes are attached to the mitochondrial inner membrane and translation products are cotranslationally integrated into the membrane. The chain is Large ribosomal subunit protein bL28m (MRPL24) from Saccharomyces cerevisiae (strain ATCC 204508 / S288c) (Baker's yeast).